The chain runs to 1146 residues: Killer toxin subunits alpha/beta (1146 aa).

The signal sequence occupies residues 1–17 (MNIFYIFLFLLSFVQGL). Positions 18–29 (EHTHRRGSLVKR) are excised as a propeptide. LysM domains follow at residues 205-234 (ADQS…QPIC) and 254-303 (KTYK…NLCV). In terms of domain architecture, Chitin-binding type-1 spans 316–372 (IAECGPLAPGEKYNAKCPLNACCSEFGFCGLTKDYCDKKSSTTGAPGTDGCFSNCGY). 4 cysteine pairs are disulfide-bonded: cysteine 319–cysteine 338, cysteine 332–cysteine 344, cysteine 337–cysteine 351, and cysteine 366–cysteine 370. One can recognise a GH18 domain in the interval 383 to 735 (FKKIAYWLDA…DDTEDPFDEE (353 aa)). Residues isoleucine 424 and 447 to 450 (GGWD) contribute to the chitin site. The Proton donor role is filled by glutamate 495. Residues tyrosine 496, 562–565 (MTYD), and tryptophan 707 each bind chitin. N-linked (GlcNAc...) asparagine glycosylation is found at asparagine 771, asparagine 858, asparagine 868, asparagine 876, and asparagine 1117.

The protein belongs to the glycosyl hydrolase 18 family. In terms of assembly, the killer toxin is composed of three subunits: alpha, beta and gamma. RF2 is potentially split by membrane-bound basic amino acid-specific peptidase to yield the alpha and beta subunits.

The catalysed reaction is Random endo-hydrolysis of N-acetyl-beta-D-glucosaminide (1-&gt;4)-beta-linkages in chitin and chitodextrins.. The alpha subunit is a potent exochitinase. Along with the beta subunit it plays a role in the initial interaction of the toxin with sensitive cells and allow the gamma subunit (the active toxin) to gain entry into the cell. In Kluyveromyces lactis (strain ATCC 8585 / CBS 2359 / DSM 70799 / NBRC 1267 / NRRL Y-1140 / WM37) (Yeast), this protein is Killer toxin subunits alpha/beta.